Reading from the N-terminus, the 331-residue chain is DNA double-strand break repair nuclease NurA (331 aa).

Mn(2+) is bound by residues Asp-56 and Asp-131.

This sequence belongs to the NurA family. As to quaternary structure, homodimer. Interacts with SSB. Mn(2+) is required as a cofactor.

The 5'-3' ssDNA and dsDNA exonuclease and ssDNA endonuclease activities are inhibited by SSB (single-stranded DNA-binding protein). Its function is as follows. Involved in DNA double-strand break (DSB) repair. Probably acts with HerA to stimulate resection of the 5' strand and produce the long 3' single-strand that is required for RadA loading. Exhibits both single-stranded endonuclease activity and 5'-3' exonuclease activity on single-stranded and double-stranded DNA. This Sulfurisphaera tokodaii (strain DSM 16993 / JCM 10545 / NBRC 100140 / 7) (Sulfolobus tokodaii) protein is DNA double-strand break repair nuclease NurA.